The sequence spans 212 residues: Outer-membrane lipoprotein LolB (212 aa).

Residues 1-16 (MACRSWVLGILLVLVG) form the signal peptide. A lipid anchor (N-palmitoyl cysteine) is attached at cysteine 17. The S-diacylglycerol cysteine moiety is linked to residue cysteine 17.

This sequence belongs to the LolB family. Monomer.

The protein localises to the cell outer membrane. Its function is as follows. Plays a critical role in the incorporation of lipoproteins in the outer membrane after they are released by the LolA protein. The sequence is that of Outer-membrane lipoprotein LolB from Nitrosomonas europaea (strain ATCC 19718 / CIP 103999 / KCTC 2705 / NBRC 14298).